The primary structure comprises 319 residues: Acetyl-coenzyme A carboxylase carboxyl transferase subunit alpha (319 aa).

The region spanning 32 to 293 is the CoA carboxyltransferase C-terminal domain; that stretch reads NVDAEVRALR…KAVLLNELDA (262 aa).

It belongs to the AccA family. In terms of assembly, acetyl-CoA carboxylase is a heterohexamer composed of biotin carboxyl carrier protein (AccB), biotin carboxylase (AccC) and two subunits each of ACCase subunit alpha (AccA) and ACCase subunit beta (AccD).

The protein localises to the cytoplasm. The catalysed reaction is N(6)-carboxybiotinyl-L-lysyl-[protein] + acetyl-CoA = N(6)-biotinyl-L-lysyl-[protein] + malonyl-CoA. The protein operates within lipid metabolism; malonyl-CoA biosynthesis; malonyl-CoA from acetyl-CoA: step 1/1. Component of the acetyl coenzyme A carboxylase (ACC) complex. First, biotin carboxylase catalyzes the carboxylation of biotin on its carrier protein (BCCP) and then the CO(2) group is transferred by the carboxyltransferase to acetyl-CoA to form malonyl-CoA. This is Acetyl-coenzyme A carboxylase carboxyl transferase subunit alpha from Xanthomonas campestris pv. campestris (strain B100).